A 396-amino-acid polypeptide reads, in one-letter code: Vacuolar protease A (396 aa).

The N-terminal stretch at 1–17 is a signal peptide; sequence MKGALLTAAMLLGSAQA. Positions 18 to 70 are cleaved as a propeptide — activation peptide; the sequence is GVHTMKLKKVPLAEQLESVPIDVQVQHLGQKYTGLRTESHTQAMFKATDAQVS. The 308-residue stretch at 85–392 folds into the Peptidase A1 domain; that stretch reads YFSEITIGTP…DLGADTVGIA (308 aa). Asp-103 is a catalytic residue. Cys-116 and Cys-121 are joined by a disulfide. Asn-138 is a glycosylation site (N-linked (GlcNAc...) asparagine). Residue Asp-284 is part of the active site. Cys-318 and Cys-351 form a disulfide bridge. Residue Asn-335 is glycosylated (N-linked (GlcNAc...) asparagine).

Belongs to the peptidase A1 family.

The protein resides in the vacuole. This is Vacuolar protease A (pep-4) from Neurospora crassa (strain ATCC 24698 / 74-OR23-1A / CBS 708.71 / DSM 1257 / FGSC 987).